The sequence spans 147 residues: Phosphoribosyl-AMP cyclohydrolase (147 aa).

Mg(2+) is bound at residue Asp-91. Zn(2+) is bound at residue Cys-92. 2 residues coordinate Mg(2+): Asp-93 and Asp-95. Zn(2+) is bound by residues Cys-109 and Cys-116.

The protein belongs to the PRA-CH family. In terms of assembly, homodimer. The cofactor is Mg(2+). Zn(2+) serves as cofactor.

The protein localises to the cytoplasm. It carries out the reaction 1-(5-phospho-beta-D-ribosyl)-5'-AMP + H2O = 1-(5-phospho-beta-D-ribosyl)-5-[(5-phospho-beta-D-ribosylamino)methylideneamino]imidazole-4-carboxamide. The protein operates within amino-acid biosynthesis; L-histidine biosynthesis; L-histidine from 5-phospho-alpha-D-ribose 1-diphosphate: step 3/9. Functionally, catalyzes the hydrolysis of the adenine ring of phosphoribosyl-AMP. This chain is Phosphoribosyl-AMP cyclohydrolase, found in Rhodopseudomonas palustris (strain BisB18).